The chain runs to 103 residues: Pterin-4-alpha-carbinolamine dehydratase 2 (103 aa).

Belongs to the pterin-4-alpha-carbinolamine dehydratase family. In terms of tissue distribution, highest level found in the kidney, liver, heart and ovarian follicles.

It catalyses the reaction (4aS,6R)-4a-hydroxy-L-erythro-5,6,7,8-tetrahydrobiopterin = (6R)-L-erythro-6,7-dihydrobiopterin + H2O. Its function is as follows. Involved in tetrahydrobiopterin biosynthesis. Seems to both prevent the formation of 7-pterins and accelerate the formation of quinonoid-BH2. Functionally, regulates the dimerization of homeodomain protein HNF-1-alpha and enhances its transcriptional activity. This chain is Pterin-4-alpha-carbinolamine dehydratase 2 (PCBD2), found in Gallus gallus (Chicken).